The chain runs to 146 residues: Cyanate hydratase (146 aa).

Active-site residues include arginine 87, glutamate 90, and serine 113.

This sequence belongs to the cyanase family.

The enzyme catalyses cyanate + hydrogencarbonate + 3 H(+) = NH4(+) + 2 CO2. Catalyzes the reaction of cyanate with bicarbonate to produce ammonia and carbon dioxide. This is Cyanate hydratase from Teredinibacter turnerae (strain ATCC 39867 / T7901).